We begin with the raw amino-acid sequence, 64 residues long: MAGHKIAHATLKGPSVVKELVIGLTLGLAAGGLWKMHHWNEQRKTRVFYDLLERGEIGVVVTEE.

Residues 15-34 form a helical membrane-spanning segment; it reads SVVKELVIGLTLGLAAGGLW.

This sequence belongs to the cytochrome c oxidase subunit 5C family.

It localises to the mitochondrion inner membrane. In terms of biological role, this protein is one of the nuclear-coded polypeptide chains of cytochrome c oxidase, the terminal oxidase in mitochondrial electron transport. This chain is Probable cytochrome c oxidase subunit 5C-3, found in Arabidopsis thaliana (Mouse-ear cress).